We begin with the raw amino-acid sequence, 198 residues long: Dynein axonemal light chain 1 (198 aa).

LRR repeat units lie at residues 49–70 (ACKHLALSTNNIEKISSLSGME), 71–92 (NLRILSLGRNLIKKIENLDAVA), 94–115 (TLEELWISYNQIASLSGIEKLV), and 116–137 (NLRVLYMSNNKITNWGEIDKLA). The LRRCT domain maps to 157–195 (KENNATSEYRIEVVKRLPNLKKLDGMPVDVDEREQANVA).

The protein belongs to the dynein light chain LC1-type family. As to quaternary structure, interacts with OCAD2, a outer arm dynein heavy chain. Interacts with tubulin (previously called p45) located within the A-tubule of the outer doublets in a ATP-independent manner.

The protein resides in the cytoplasm. The protein localises to the cytoskeleton. It localises to the flagellum axoneme. Part of the multisubunit axonemal ATPase complexes that generate the force for flagellar motility and govern beat frequency. Component of the outer arm dynein (ODA). May be involved in a mechanosensory feedback mechanism controlling ODA activity based on external conformational cues by tethering the outer arm dynein heavy chain (ODA2) to the A-tubule of the outer doublet microtubules within the axoneme. The chain is Dynein axonemal light chain 1 from Chlamydomonas reinhardtii (Chlamydomonas smithii).